Reading from the N-terminus, the 660-residue chain is Bifunctional polymyxin resistance protein ArnA (660 aa).

The segment at Met1–Leu304 is formyltransferase ArnAFT. His104 (proton donor; for formyltransferase activity) is an active-site residue. (6R)-10-formyltetrahydrofolate-binding positions include Arg114 and Val136–Asp140. The interval Arg314–Ala660 is dehydrogenase ArnADH. NAD(+)-binding positions include Asp347 and Asp368–Ile369. UDP-alpha-D-glucuronate is bound by residues Ala393, Tyr398, and Thr432–Ser433. Glu434 acts as the Proton acceptor; for decarboxylase activity in catalysis. UDP-alpha-D-glucuronate is bound by residues Arg460, Asn492, Lys526–Arg535, and Tyr613. Residue Arg619 is the Proton donor; for decarboxylase activity of the active site.

It in the N-terminal section; belongs to the Fmt family. UDP-L-Ara4N formyltransferase subfamily. This sequence in the C-terminal section; belongs to the NAD(P)-dependent epimerase/dehydratase family. UDP-glucuronic acid decarboxylase subfamily. In terms of assembly, homohexamer, formed by a dimer of trimers.

The catalysed reaction is UDP-alpha-D-glucuronate + NAD(+) = UDP-beta-L-threo-pentopyranos-4-ulose + CO2 + NADH. The enzyme catalyses UDP-4-amino-4-deoxy-beta-L-arabinose + (6R)-10-formyltetrahydrofolate = UDP-4-deoxy-4-formamido-beta-L-arabinose + (6S)-5,6,7,8-tetrahydrofolate + H(+). Its pathway is nucleotide-sugar biosynthesis; UDP-4-deoxy-4-formamido-beta-L-arabinose biosynthesis; UDP-4-deoxy-4-formamido-beta-L-arabinose from UDP-alpha-D-glucuronate: step 1/3. It participates in nucleotide-sugar biosynthesis; UDP-4-deoxy-4-formamido-beta-L-arabinose biosynthesis; UDP-4-deoxy-4-formamido-beta-L-arabinose from UDP-alpha-D-glucuronate: step 3/3. The protein operates within bacterial outer membrane biogenesis; lipopolysaccharide biosynthesis. Functionally, bifunctional enzyme that catalyzes the oxidative decarboxylation of UDP-glucuronic acid (UDP-GlcUA) to UDP-4-keto-arabinose (UDP-Ara4O) and the addition of a formyl group to UDP-4-amino-4-deoxy-L-arabinose (UDP-L-Ara4N) to form UDP-L-4-formamido-arabinose (UDP-L-Ara4FN). The modified arabinose is attached to lipid A and is required for resistance to polymyxin and cationic antimicrobial peptides. The sequence is that of Bifunctional polymyxin resistance protein ArnA from Serratia proteamaculans (strain 568).